The primary structure comprises 559 residues: Polypeptide N-acetylgalactosaminyltransferase 1 (559 aa).

At 1–8 the chain is on the cytoplasmic side; it reads MRKFAYCK. Residues 9–28 traverse the membrane as a helical; Signal-anchor for type II membrane protein segment; sequence VVLATSLVWVLLDMFLLLYF. At 29 to 559 the chain is on the lumenal side; it reads SECNKCEEKK…LRNVTLPEIF (531 aa). An N-linked (GlcNAc...) asparagine glycan is attached at Asn-95. Disulfide bonds link Cys-106–Cys-339, Cys-330–Cys-408, Cys-442–Cys-459, Cys-482–Cys-497, and Cys-523–Cys-540. The tract at residues 115-225 is catalytic subdomain A; the sequence is LPTTSVVIVF…VGWLEPLLAR (111 aa). Residues Asp-156 and Arg-186 each coordinate substrate. Residues Asp-209 and His-211 each coordinate Mn(2+). A catalytic subdomain B region spans residues 285-347; sequence PVRTPTMAGG…TCSHVGHVFR (63 aa). Trp-316 contributes to the substrate binding site. Mn(2+) is bound at residue His-344. Substrate is bound by residues Arg-347 and Tyr-352. A Ricin B-type lectin domain is found at 429 to 551; it reads FSLGEIRNVE…GSRSQQWLLR (123 aa). N-linked (GlcNAc...) asparagine glycosylation occurs at Asn-552.

The protein belongs to the glycosyltransferase 2 family. GalNAc-T subfamily. Requires Mn(2+) as cofactor. As to expression, heart, brain, spleen, liver, skeletal muscle and kidney.

Its subcellular location is the golgi apparatus. It is found in the golgi stack membrane. The protein localises to the secreted. The catalysed reaction is L-seryl-[protein] + UDP-N-acetyl-alpha-D-galactosamine = a 3-O-[N-acetyl-alpha-D-galactosaminyl]-L-seryl-[protein] + UDP + H(+). It carries out the reaction L-threonyl-[protein] + UDP-N-acetyl-alpha-D-galactosamine = a 3-O-[N-acetyl-alpha-D-galactosaminyl]-L-threonyl-[protein] + UDP + H(+). It participates in protein modification; protein glycosylation. Catalyzes the initial reaction in O-linked oligosaccharide biosynthesis, the transfer of an N-acetyl-D-galactosamine residue to a serine or threonine residue on the protein receptor. Has a broad spectrum of substrates such as apomucin-, MUC5AC-, MUC1- and MUC2-derived peptides. This Rattus norvegicus (Rat) protein is Polypeptide N-acetylgalactosaminyltransferase 1.